Reading from the N-terminus, the 283-residue chain is 5'-nucleotidase SurE (283 aa).

Positions 14, 15, 47, and 105 each coordinate a divalent metal cation.

Belongs to the SurE nucleotidase family. It depends on a divalent metal cation as a cofactor.

The protein resides in the cytoplasm. The catalysed reaction is a ribonucleoside 5'-phosphate + H2O = a ribonucleoside + phosphate. Functionally, nucleotidase that shows phosphatase activity on nucleoside 5'-monophosphates. The protein is 5'-nucleotidase SurE of Chlamydia trachomatis serovar D (strain ATCC VR-885 / DSM 19411 / UW-3/Cx).